Here is a 56-residue protein sequence, read N- to C-terminus: Preprotein translocase subunit SecG (56 aa).

Residues 1–30 lie on the Cytoplasmic side of the membrane; it reads MARKDKKTLPASGAGIVRYFNDDTAGVKLS. Residues 31-52 form a helical membrane-spanning segment; the sequence is PKQVVIGTIIVALICIALRFTT. Over 53 to 56 the chain is Extracellular; sequence SVGY.

It belongs to the SEC61-beta family. As to quaternary structure, component of the protein translocase complex. Heterotrimer consisting of alpha (SecY), beta (SecG) and gamma (SecE) subunits. Can form oligomers of the heterotrimer.

It is found in the cell membrane. Its function is as follows. Involved in protein export. The function of the beta subunit is unknown, but it may be involved in stabilization of the trimeric complex. This Methanosphaera stadtmanae (strain ATCC 43021 / DSM 3091 / JCM 11832 / MCB-3) protein is Preprotein translocase subunit SecG.